Here is a 460-residue protein sequence, read N- to C-terminus: Phosphomethylpyrimidine synthase (460 aa).

Substrate contacts are provided by residues Asn-80, Met-109, Tyr-139, His-175, 195–197, 236–239, and Glu-275; these read SRG and DSLR. Residue His-279 coordinates Zn(2+). Position 302 (Tyr-302) interacts with substrate. Residue His-343 participates in Zn(2+) binding. 3 residues coordinate [4Fe-4S] cluster: Cys-423, Cys-426, and Cys-431.

The protein belongs to the ThiC family. It depends on [4Fe-4S] cluster as a cofactor.

The catalysed reaction is 5-amino-1-(5-phospho-beta-D-ribosyl)imidazole + S-adenosyl-L-methionine = 4-amino-2-methyl-5-(phosphooxymethyl)pyrimidine + CO + 5'-deoxyadenosine + formate + L-methionine + 3 H(+). It functions in the pathway cofactor biosynthesis; thiamine diphosphate biosynthesis. Catalyzes the synthesis of the hydroxymethylpyrimidine phosphate (HMP-P) moiety of thiamine from aminoimidazole ribotide (AIR) in a radical S-adenosyl-L-methionine (SAM)-dependent reaction. This is Phosphomethylpyrimidine synthase from Rippkaea orientalis (strain PCC 8801 / RF-1) (Cyanothece sp. (strain PCC 8801)).